An 89-amino-acid polypeptide reads, in one-letter code: Dynein light chain 1, cytoplasmic (89 aa).

It belongs to the dynein light chain family. Interacts with spn-F. Forms ternary complexes with spn-F and IKKepsilon. In terms of tissue distribution, ubiquitous.

The protein localises to the cytoplasm. It is found in the cytoskeleton. Acts as a non-catalytic accessory component of a dynein complex. The chain is Dynein light chain 1, cytoplasmic (ctp) from Drosophila melanogaster (Fruit fly).